The sequence spans 977 residues: Ephrin type-A receptor 2 (977 aa).

Residues 1–25 form the signal peptide; sequence MELRAVGFCLALLWGCALAAAAAQG. The tract at residues 1 to 205 is mediates interaction with CLDN4; sequence MELRAVGFCL…YYKKCPEMLQ (205 aa). Residues 26-538 are Extracellular-facing; that stretch reads KEVVLLDFAA…STEGSANMAV (513 aa). The region spanning 27–205 is the Eph LBD domain; it reads EVVLLDFAAM…YYKKCPEMLQ (179 aa). Cystine bridges form between Cys69/Cys187 and Cys104/Cys114. The Fibronectin type-III 1 domain occupies 329-433; it reads PPSAPNYLTA…TSRSFRTASV (105 aa). N-linked (GlcNAc...) asparagine glycans are attached at residues Asn408 and Asn436. A Fibronectin type-III 2 domain is found at 439 to 530; that stretch reads EPPKVRLEDR…KVHEFQTLST (92 aa). A helical membrane pass occupies residues 539-559; that stretch reads IGGVAVGVVLLLVLAGVGLFI. Topologically, residues 560 to 977 are cytoplasmic; that stretch reads HRRRRNLRAR…DQVNTVGIPI (418 aa). Residues Ser571 and Ser580 each carry the phosphoserine modification. Tyr589 and Tyr595 each carry phosphotyrosine; by autocatalysis. A mediates interaction with ARHGEF16 region spans residues 607-907; it reads TEIHPSCVAR…STSGSEGVPF (301 aa). One can recognise a Protein kinase domain in the interval 614-876; that stretch reads VARQKVIGAG…DIVSILDKLI (263 aa). Residue 620–628 participates in ATP binding; the sequence is IGAGEFGEV. Tyr629 carries the phosphotyrosine modification. Residue Lys647 participates in ATP binding. Thr648 is subject to Phosphothreonine. Tyr736 carries the phosphotyrosine; by autocatalysis modification. The active-site Proton acceptor is the Asp740. Position 773 is a phosphotyrosine; by autocatalysis (Tyr773). A phosphoserine mark is found at Ser870, Ser893, Ser898, and Ser902. The negatively regulates interaction with ARHGEF16 stretch occupies residues 887–977; that stretch reads DFDPRVSIRL…DQVNTVGIPI (91 aa). Residues 905 to 969 enclose the SAM domain; the sequence is VPFRTVSEWL…AYSLLGLKDQ (65 aa). A Phosphotyrosine; by autocatalysis modification is found at Tyr922. Position 931 is a phosphotyrosine (Tyr931). Residues 975-977 carry the PDZ-binding motif; it reads IPI.

The protein belongs to the protein kinase superfamily. Tyr protein kinase family. Ephrin receptor subfamily. In terms of assembly, homodimer. Interacts with INPPL1; regulates activated EPHA2 endocytosis and degradation. Interacts (inactivated form) with PTK2/FAK1 and interacts (EFNA1 ligand-activated form) with PTPN11; regulates integrin-mediated adhesion. Interacts with ARHGEF16, DOCK4 and ELMO2; mediates ligand-independent activation of RAC1 which stimulates cell migration. Interacts with CLDN4; phosphorylates CLDN4 and may regulate tight junctions. Interacts with ACP1. Interacts with CEMIP. Interacts with NCK1; may regulate EPHA2 activity in cell migration and adhesion. Interacts with SLA. Interacts (phosphorylated form) with VAV2, VAV3 and PI3-kinase p85 subunit (PIK3R1, PIK3R2 or PIK3R3); critical for the EFNA1-induced activation of RAC1 which stimulates cell migration. Interacts with ANKS1A. Interacts with TIMD4. In terms of processing, autophosphorylates. Phosphorylated at Ser-898 by PKB; serum-induced phosphorylation which targets EPHA2 to the cell leading edge and stimulates cell migration. Phosphorylation by PKB is inhibited by EFNA1-activated EPHA2 which regulates PKB activity via a reciprocal regulatory loop. Phosphorylated on tyrosine upon binding and activation by EFNA1. Phosphorylated residues Tyr-589 and Tyr-595 are required for binding VAV2 and VAV3 while phosphorylated residues Tyr-736 and Tyr-931 are required for binding PI3-kinase p85 subunit (PIK3R1, PIK3R2 or PIK3R3). These phosphorylated residues are critical for recruitment of VAV2 and VAV3 and PI3-kinase p85 subunit which transduce downstream signaling to activate RAC1 GTPase and cell migration. Dephosphorylation of Tyr-931 by PTPRF prevents the interaction of EPHA2 with NCK1. Phosphorylated at Ser-898 in response to TNF by RPS6KA1 and RPS6KA3; RPS6KA-EPHA2 signaling pathway controls cell migration. Phosphorylated at Ser-898 by PKA; blocks cell retraction induced by EPHA2 kinase activity. Dephosphorylated by ACP1. Post-translationally, ubiquitinated by CHIP/STUB1. Ubiquitination is regulated by the HSP90 chaperone and regulates the receptor stability and activity through proteasomal degradation. ANKS1A prevents ubiquitination and degradation. Expressed in the lung, intestine and liver. Expressed in myogenic progenitor cells.

The protein resides in the cell membrane. It is found in the cell projection. The protein localises to the ruffle membrane. It localises to the lamellipodium membrane. Its subcellular location is the cell junction. The protein resides in the focal adhesion. It carries out the reaction L-tyrosyl-[protein] + ATP = O-phospho-L-tyrosyl-[protein] + ADP + H(+). Functionally, receptor tyrosine kinase which binds promiscuously membrane-bound ephrin-A family ligands residing on adjacent cells, leading to contact-dependent bidirectional signaling into neighboring cells. The signaling pathway downstream of the receptor is referred to as forward signaling while the signaling pathway downstream of the ephrin ligand is referred to as reverse signaling. Activated by the ligand ephrin-A1/EFNA1 regulates migration, integrin-mediated adhesion, proliferation and differentiation of cells. Regulates cell adhesion and differentiation through DSG1/desmoglein-1 and inhibition of the ERK1/ERK2 signaling pathway. May also participate in UV radiation-induced apoptosis and have a ligand-independent stimulatory effect on chemotactic cell migration. During development, may function in distinctive aspects of pattern formation and subsequently in development of several fetal tissues. Involved for instance in angiogenesis, in early hindbrain development and epithelial proliferation and branching morphogenesis during mammary gland development. Engaged by the ligand ephrin-A5/EFNA5 may regulate lens fiber cells shape and interactions and be important for lens transparency development and maintenance. With ephrin-A2/EFNA2 may play a role in bone remodeling through regulation of osteoclastogenesis and osteoblastogenesis. This Mus musculus (Mouse) protein is Ephrin type-A receptor 2 (Epha2).